A 182-amino-acid polypeptide reads, in one-letter code: CDP-diacylglycerol--glycerol-3-phosphate 3-phosphatidyltransferase (182 aa).

Topologically, residues Gln2–Phe12 are cytoplasmic. The chain crosses the membrane as a helical span at residues Arg13–Leu37. Over Ile38–Thr60 the chain is Periplasmic. A helical membrane pass occupies residues Arg61 to Leu81. The Cytoplasmic portion of the chain corresponds to Val82–Tyr86. The chain crosses the membrane as a helical span at residues His87–Ala107. The Periplasmic segment spans residues Leu108 to Pro145. The helical transmembrane segment at Asn146–Met168 threads the bilayer. Residues Leu169 to Asp181 are Cytoplasmic-facing.

It belongs to the CDP-alcohol phosphatidyltransferase class-I family.

The protein localises to the cell inner membrane. It carries out the reaction a CDP-1,2-diacyl-sn-glycerol + sn-glycerol 3-phosphate = a 1,2-diacyl-sn-glycero-3-phospho-(1'-sn-glycero-3'-phosphate) + CMP + H(+). It participates in phospholipid metabolism; phosphatidylglycerol biosynthesis; phosphatidylglycerol from CDP-diacylglycerol: step 1/2. In terms of biological role, catalyzes the conversion of cytidine diphosphate diacylglycerol (CDP-DG) and glycerol 3-phosphate into phosphatidylglycerol. Essential for the synthesis of anionic phospholipids, thereby playing a role in balancing the ratio of zwitterionic and anionic phospholipids, which is thought to be important for normal membrane function. The chain is CDP-diacylglycerol--glycerol-3-phosphate 3-phosphatidyltransferase from Salmonella paratyphi A (strain ATCC 9150 / SARB42).